Reading from the N-terminus, the 398-residue chain is Alpha-2,8-sialyltransferase 8F (398 aa).

Topologically, residues 1–3 are cytoplasmic; the sequence is MRP. A helical; Signal-anchor for type II membrane protein membrane pass occupies residues 4 to 24; the sequence is GGALLALLASLLLLLLLRLLW. The Lumenal segment spans residues 25–398; it reads CPADAPGRAR…KLQFSKCEVA (374 aa). Residues N66, N93, N151, and N196 are each glycosylated (N-linked (GlcNAc...) asparagine). 2 cysteine pairs are disulfide-bonded: C186-C335 and C200-C395. Substrate is bound by residues N214, 236-238, and 322-324; these read NPS and STG. H370 serves as the catalytic Proton donor/acceptor.

It belongs to the glycosyltransferase 29 family.

The protein resides in the golgi apparatus membrane. It carries out the reaction a ganglioside GM3 + CMP-N-acetyl-beta-neuraminate = a ganglioside GD3 + CMP + H(+). The enzyme catalyses a ganglioside GM3 (d18:1(4E)) + CMP-N-acetyl-beta-neuraminate = a ganglioside GD3 (d18:1(4E)) + CMP + H(+). It catalyses the reaction a ganglioside GD1a (d18:1(4E)) + CMP-N-acetyl-beta-neuraminate = a ganglioside GT1a (d18:1(4E)) + CMP + H(+). The catalysed reaction is a ganglioside GD1a + CMP-N-acetyl-beta-neuraminate = a ganglioside GT1a + CMP + H(+). It carries out the reaction a ganglioside GM1b (d18:1(4E)) + CMP-N-acetyl-beta-neuraminate = a ganglioside GD1c (d18:1(4E)) + CMP + H(+). The enzyme catalyses a ganglioside GM1b + CMP-N-acetyl-beta-neuraminate = a ganglioside GD1c + CMP + H(+). It catalyses the reaction a ganglioside GM4 (d18:1(4E)) + CMP-N-acetyl-beta-neuraminate = an N-acetyl-alpha-neuraminosyl-(2-&gt;8)-N-acetyl-alpha-neuraminosyl-(2-&gt;3)-beta-D-galactosyl-(1&lt;-&gt;1')-N-acylsphing-4-enine + CMP + H(+). The catalysed reaction is N-acetyl-alpha-neuraminosyl-(2-&gt;3)-beta-D-galactosyl-(1&lt;-&gt;1')-ceramide + CMP-N-acetyl-beta-neuraminate = N-acetyl-alpha-neuraminosyl-(2-&gt;8)-N-acetyl-alpha-neuraminosyl-(2-&gt;3)-beta-D-galactosyl-(1&lt;-&gt;1')-ceramide + CMP + H(+). It carries out the reaction a ganglioside GT1b (d18:1(4E)) + CMP-N-acetyl-beta-neuraminate = a ganglioside GQ1b (d18:1(4E)) + CMP + H(+). The enzyme catalyses a ganglioside GT1b + CMP-N-acetyl-beta-neuraminate = a ganglioside GQ1b + CMP + H(+). It participates in protein modification; protein glycosylation. Functionally, alpha-2,8-sialyltransferase that prefers O-glycans to N-glycans or glycolipids as acceptor substrates. The minimal acceptor substrate is the NeuAc-alpha-2,3(6)-Gal sequence at the non-reducing end of their carbohydrate groups. This is Alpha-2,8-sialyltransferase 8F (ST8SIA6) from Pan troglodytes (Chimpanzee).